The sequence spans 277 residues: Small ribosomal subunit protein uS3 (277 aa).

In terms of domain architecture, KH type-2 spans 43–111 (IRQLMSTGME…QVQLNILEVK (69 aa)). Low complexity predominate over residues 218 to 228 (QQAAAAPSRGR). Positions 218–277 (QQAAAAPSRGRGASDRPGRPGGADRGDRRRRTDRPAAEAAPAAEAPAVEAAAPAVEGGQA) are disordered. Positions 229–244 (GASDRPGRPGGADRGD) are enriched in basic and acidic residues. The segment covering 254 to 277 (AEAAPAAEAPAVEAAAPAVEGGQA) has biased composition (low complexity).

The protein belongs to the universal ribosomal protein uS3 family. As to quaternary structure, part of the 30S ribosomal subunit. Forms a tight complex with proteins S10 and S14.

Functionally, binds the lower part of the 30S subunit head. Binds mRNA in the 70S ribosome, positioning it for translation. The chain is Small ribosomal subunit protein uS3 from Arthrobacter sp. (strain FB24).